A 169-amino-acid chain; its full sequence is Nicotinamide-nucleotide adenylyltransferase (169 aa).

The protein belongs to the archaeal NMN adenylyltransferase family.

It is found in the cytoplasm. The catalysed reaction is beta-nicotinamide D-ribonucleotide + ATP + H(+) = diphosphate + NAD(+). It functions in the pathway cofactor biosynthesis; NAD(+) biosynthesis; NAD(+) from nicotinamide D-ribonucleotide: step 1/1. The polypeptide is Nicotinamide-nucleotide adenylyltransferase (Picrophilus torridus (strain ATCC 700027 / DSM 9790 / JCM 10055 / NBRC 100828 / KAW 2/3)).